Consider the following 555-residue polypeptide: Glutamine--tRNA ligase (555 aa).

Positions 34–44 (PEPNGYLHIGH) match the 'HIGH' region motif. Residues 35–37 (EPN) and 41–47 (HIGHAKS) contribute to the ATP site. L-glutamine is bound by residues aspartate 67 and tyrosine 212. Residues threonine 231, 261 to 262 (RL), and 269 to 271 (MSK) contribute to the ATP site. The short motif at 268–272 (IMSKR) is the 'KMSKS' region element.

Belongs to the class-I aminoacyl-tRNA synthetase family. As to quaternary structure, monomer.

The protein resides in the cytoplasm. The catalysed reaction is tRNA(Gln) + L-glutamine + ATP = L-glutaminyl-tRNA(Gln) + AMP + diphosphate. This Erwinia tasmaniensis (strain DSM 17950 / CFBP 7177 / CIP 109463 / NCPPB 4357 / Et1/99) protein is Glutamine--tRNA ligase.